Reading from the N-terminus, the 123-residue chain is Small ribosomal subunit protein uS13 (123 aa).

The segment at 93 to 123 (RRNLPVRGQKTKTNARTRKGPKRAIGGKKKK) is disordered.

The protein belongs to the universal ribosomal protein uS13 family. Part of the 30S ribosomal subunit. Forms a loose heterodimer with protein S19. Forms two bridges to the 50S subunit in the 70S ribosome.

In terms of biological role, located at the top of the head of the 30S subunit, it contacts several helices of the 16S rRNA. In the 70S ribosome it contacts the 23S rRNA (bridge B1a) and protein L5 of the 50S subunit (bridge B1b), connecting the 2 subunits; these bridges are implicated in subunit movement. Contacts the tRNAs in the A and P-sites. This is Small ribosomal subunit protein uS13 from Clostridium botulinum (strain Kyoto / Type A2).